The following is a 323-amino-acid chain: Olfactory receptor 52B2 (323 aa).

At 1–27 (MSHTNVTIFHPAVFVLPGIPGLEAYHI) the chain is on the extracellular side. Asparagine 5 carries an N-linked (GlcNAc...) asparagine glycan. The chain crosses the membrane as a helical span at residues 28 to 48 (WLSIPLCLIYITAVLGNSILI). At 49-56 (VVIVMERN) the chain is on the cytoplasmic side. The chain crosses the membrane as a helical span at residues 57 to 77 (LHVPMYFFLSMLAVMDILLST). Residues 78–101 (TTVPKALAIFWLQAHNIAFDACVT) lie on the Extracellular side of the membrane. The cysteines at positions 99 and 191 are disulfide-linked. Residues 102–122 (QGFFVHMMFVGESAILLAMAF) form a helical membrane-spanning segment. Topologically, residues 123–141 (DRFVAICAPLRYTTVLTWP) are cytoplasmic. The helical transmembrane segment at 142–162 (VVGRIALAVITRSFCIIFPVI) threads the bilayer. Over 163 to 198 (FLLKRLPFCLTNIVPHSYCEHIGVARLACADITVNI) the chain is Extracellular. Residues 199-219 (WYGFSVPIVMVILDVILIAVS) traverse the membrane as a helical segment. The Cytoplasmic portion of the chain corresponds to 220-239 (YSLILRAVFRLPSQDARHKA). A helical membrane pass occupies residues 240-260 (LSTCGSHLCVILMFYVPSFFT). Residues 261 to 275 (LLTHHFGRNIPQHVH) lie on the Extracellular side of the membrane. A helical transmembrane segment spans residues 276–296 (ILLANLYVAVPPMLNPIVYGV). At 297–323 (KTKQIREGVAHRFFDIKTWCCTSPLGS) the chain is on the cytoplasmic side.

This sequence belongs to the G-protein coupled receptor 1 family.

It localises to the cell membrane. Its function is as follows. Odorant receptor. The sequence is that of Olfactory receptor 52B2 (OR52B2) from Homo sapiens (Human).